Here is a 151-residue protein sequence, read N- to C-terminus: Leukocyte cell-derived chemotaxin-2 (151 aa).

An N-terminal signal peptide occupies residues 1–18 (MIPTTILISAALLSSALA). 3 cysteine pairs are disulfide-bonded: Cys25–Cys60, Cys36–Cys41, and Cys99–Cys142. Zn(2+)-binding residues include His53, Asp57, and His138.

Belongs to the LECT2/MIM-1 family. Highly expressed in liver and weakly in testis. Not expressed in heart, brain, spleen, lung, skeletal muscle and kidney.

Its subcellular location is the secreted. Functionally, has a neutrophil chemotactic activity. Also a positive regulator of chondrocyte proliferation. The sequence is that of Leukocyte cell-derived chemotaxin-2 (Lect2) from Mus musculus (Mouse).